The sequence spans 148 residues: NADH-ubiquinone oxidoreductase chain 3 (148 aa).

The next 3 membrane-spanning stretches (helical) occupy residues 19–39, 70–90, and 99–119; these read FYMI…YIIT, FILI…ILPY, and IYGL…FIIE.

The protein belongs to the complex I subunit 3 family.

It localises to the mitochondrion membrane. It catalyses the reaction a ubiquinone + NADH + 5 H(+)(in) = a ubiquinol + NAD(+) + 4 H(+)(out). In terms of biological role, core subunit of the mitochondrial membrane respiratory chain NADH dehydrogenase (Complex I) that is believed to belong to the minimal assembly required for catalysis. Complex I functions in the transfer of electrons from NADH to the respiratory chain. The immediate electron acceptor for the enzyme is believed to be ubiquinone. The sequence is that of NADH-ubiquinone oxidoreductase chain 3 (ND3) from Wickerhamomyces canadensis (Yeast).